The following is a 538-amino-acid chain: T-complex protein 1 subunit epsilon (538 aa).

It belongs to the TCP-1 chaperonin family. Heterooligomeric complex of about 850 to 900 kDa that forms two stacked rings, 12 to 16 nm in diameter.

It is found in the cytoplasm. Molecular chaperone; assists the folding of proteins upon ATP hydrolysis. Known to play a role, in vitro, in the folding of actin and tubulin. This chain is T-complex protein 1 subunit epsilon (cct5), found in Dictyostelium discoideum (Social amoeba).